A 284-amino-acid chain; its full sequence is Cell division protein DivIB (284 aa).

A disordered region spans residues Met-1 to Pro-21. At Met-1–Arg-63 the chain is on the cytoplasmic side. The chain crosses the membrane as a helical span at residues Val-64 to Pro-84. Topologically, residues Val-85–Lys-284 are extracellular. The region spanning Ser-86–Tyr-156 is the POTRA domain.

Belongs to the FtsQ/DivIB family. DivIB subfamily.

It is found in the cell membrane. In terms of biological role, cell division protein that may be involved in stabilizing or promoting the assembly of the division complex. This is Cell division protein DivIB from Ligilactobacillus salivarius (strain CECT 5713) (Lactobacillus salivarius).